We begin with the raw amino-acid sequence, 347 residues long: tRNA pseudouridine synthase D (347 aa).

Catalysis depends on D81, which acts as the Nucleophile. Positions 158-305 (GVPNYFGSQR…RHDRREIALK (148 aa)) constitute a TRUD domain.

It belongs to the pseudouridine synthase TruD family.

It carries out the reaction uridine(13) in tRNA = pseudouridine(13) in tRNA. Functionally, responsible for synthesis of pseudouridine from uracil-13 in transfer RNAs. The protein is tRNA pseudouridine synthase D of Vibrio parahaemolyticus serotype O3:K6 (strain RIMD 2210633).